We begin with the raw amino-acid sequence, 454 residues long: Alkaline extracellular protease (454 aa).

A signal peptide spans 1-15; that stretch reads MKLATAFTILTAVLA. The propeptide occupies 16–157; that stretch reads APLAAPAPAP…EIPASSNAKR (142 aa). The Inhibitor I9 domain occupies 68–146; sequence FIVVFDSSAT…TVEPDTIVSL (79 aa). Asn-123 is a glycosylation site (N-linked (GlcNAc...) asparagine). One can recognise a Peptidase S8 domain in the interval 166 to 454; sequence QWGLSRISHK…NAVAYNGVGI (289 aa). Catalysis depends on charge relay system residues Asp-200, His-231, and Ser-397.

The protein belongs to the peptidase S8 family. Post-translationally, the pro-region is removed through cleavage by XPR6 after Lys156-Arg157, which yields mature active XPR2. In terms of processing, the 10 consecutive -X-Ala- or -X-Pro- dipeptides located over 100 amino acids upstream of the N-terminal of mature XPR2 are subject to dipeptidyl aminopeptidase (DPAPase)-processing. DPAPase activity is not necessary for XPR6 cleavage and for secretion of mature active XPR2. N-glycosylated. Glycosylation within the pro-region has no effect on secretion and maturation at 18 degrees Celsius, but is required for secretion at 28 degrees Celsius.

It is found in the secreted. It catalyses the reaction Hydrolysis of proteins with broad specificity for peptide bonds, and a preference for a large uncharged residue in P1. Hydrolyzes peptide amides.. The protease activity is completely inhibited by the serine inhibitor PMSF but is not affected by thiol group inhibitors and in the presence of dithiothreitol. In the presence of high concentrations of o-phenanthroline the protease activity is only partially inhibited. The pro-region plays an inhibitory role and may provide a mechanism for preventing premature activation in the secretory pathway. In terms of biological role, major secreted protein that belongs to the subtilisin family serine proteases. The chain is Alkaline extracellular protease from Yarrowia lipolytica (strain CLIB 122 / E 150) (Yeast).